Consider the following 137-residue polypeptide: F420H(2)-dependent biliverdin reductase (137 aa).

Residues 36–41, 54–55, 60–61, R67, and 78–81 contribute to the coenzyme F420-(gamma-Glu)n site; these read HVVAVG, IT, QK, and GARW.

The protein belongs to the F420H(2)-dependent biliverdin reductase family. As to quaternary structure, homodimer.

It localises to the cell surface. Its subcellular location is the secreted. The enzyme catalyses (4Z,15Z)-bilirubin IXalpha + oxidized coenzyme F420-(gamma-L-Glu)(n) + H(+) = biliverdin IXalpha + reduced coenzyme F420-(gamma-L-Glu)(n). In terms of biological role, catalyzes the F420H(2)-dependent reduction of biliverdin-IXalpha at C10 position, leading to bilirubin-IXalpha, a potent antioxidant. As biliverdin-IXalpha is produced in high amounts in macrophages infected with M.tuberculosis, its reduction by Rv2074 may play a role in protecting mycobacteria against oxidative stress, aiding the persistence of M.tuberculosis infection. This chain is F420H(2)-dependent biliverdin reductase, found in Mycobacterium tuberculosis (strain CDC 1551 / Oshkosh).